A 111-amino-acid chain; its full sequence is Large ribosomal subunit protein uL22 (111 aa).

The protein belongs to the universal ribosomal protein uL22 family. As to quaternary structure, part of the 50S ribosomal subunit.

In terms of biological role, this protein binds specifically to 23S rRNA; its binding is stimulated by other ribosomal proteins, e.g. L4, L17, and L20. It is important during the early stages of 50S assembly. It makes multiple contacts with different domains of the 23S rRNA in the assembled 50S subunit and ribosome. Functionally, the globular domain of the protein is located near the polypeptide exit tunnel on the outside of the subunit, while an extended beta-hairpin is found that lines the wall of the exit tunnel in the center of the 70S ribosome. This chain is Large ribosomal subunit protein uL22, found in Legionella pneumophila (strain Lens).